The sequence spans 295 residues: Nitrogenase iron protein 1 (295 aa).

G12–S19 serves as a coordination point for ATP. C100 provides a ligand contact to [4Fe-4S] cluster. Position 103 is an ADP-ribosylarginine; by dinitrogenase reductase ADP-ribosyltransferase (R103). Residue C134 participates in [4Fe-4S] cluster binding.

This sequence belongs to the NifH/BchL/ChlL family. In terms of assembly, homodimer. [4Fe-4S] cluster serves as cofactor. In terms of processing, the reversible ADP-ribosylation of Arg-103 inactivates the nitrogenase reductase and regulates nitrogenase activity.

It catalyses the reaction N2 + 8 reduced [2Fe-2S]-[ferredoxin] + 16 ATP + 16 H2O = H2 + 8 oxidized [2Fe-2S]-[ferredoxin] + 2 NH4(+) + 16 ADP + 16 phosphate + 6 H(+). Its function is as follows. The key enzymatic reactions in nitrogen fixation are catalyzed by the nitrogenase complex, which has 2 components: the iron protein and the molybdenum-iron protein. The chain is Nitrogenase iron protein 1 (nifH1) from Mastigocladus laminosus (Fischerella sp.).